The sequence spans 272 residues: Bifunctional protein FolD 2 (272 aa).

NADP(+)-binding positions include 157-159 (GRS), Thr182, and Ile223.

This sequence belongs to the tetrahydrofolate dehydrogenase/cyclohydrolase family. In terms of assembly, homodimer.

It carries out the reaction (6R)-5,10-methylene-5,6,7,8-tetrahydrofolate + NADP(+) = (6R)-5,10-methenyltetrahydrofolate + NADPH. The enzyme catalyses (6R)-5,10-methenyltetrahydrofolate + H2O = (6R)-10-formyltetrahydrofolate + H(+). The protein operates within one-carbon metabolism; tetrahydrofolate interconversion. Its function is as follows. Catalyzes the oxidation of 5,10-methylenetetrahydrofolate to 5,10-methenyltetrahydrofolate and then the hydrolysis of 5,10-methenyltetrahydrofolate to 10-formyltetrahydrofolate. The protein is Bifunctional protein FolD 2 of Syntrophomonas wolfei subsp. wolfei (strain DSM 2245B / Goettingen).